A 518-amino-acid polypeptide reads, in one-letter code: Protein translocase subunit SecD (518 aa).

Helical transmembrane passes span 9–29 (IVLSIICTVFAIICALPNFIQ), 356–376 (GKKAGLIGFVAVCIFMILSYG), 377–397 (VIGLFANIALILALLYILALL), 406–426 (LPGIAGIILTIGMAVDANVLI), 463–483 (LIVAFALYIFGVGAIKGFAVA), and 486–506 (IGIISSMFSAIIITKLLIDVW).

This sequence belongs to the SecD/SecF family. SecD subfamily. Forms a complex with SecF. Part of the essential Sec protein translocation apparatus which comprises SecA, SecYEG and auxiliary proteins SecDF-YajC and YidC.

It localises to the cell inner membrane. In terms of biological role, part of the Sec protein translocase complex. Interacts with the SecYEG preprotein conducting channel. SecDF uses the proton motive force (PMF) to complete protein translocation after the ATP-dependent function of SecA. This is Protein translocase subunit SecD from Rickettsia prowazekii (strain Madrid E).